The following is a 78-amino-acid chain: Gas vesicle protein A (78 aa).

This sequence belongs to the gas vesicle GvpA family. As to quaternary structure, the gas vesicle shell is 2 nm thick and consists of a single layer of this protein. It forms helical ribs nearly perpendicular to the long axis of the vesicle.

It localises to the gas vesicle shell. Its function is as follows. Gas vesicles are hollow, gas filled proteinaceous nanostructures found in some microorganisms. During planktonic growth they allow positioning of the organism at a favorable depth for light or nutrient acquisition. GvpA forms the protein shell. This chain is Gas vesicle protein A, found in Halorubrum vacuolatum (Natronobacterium vacuolatum).